A 344-amino-acid polypeptide reads, in one-letter code: Protein-glutamate methylesterase/protein-glutamine glutaminase (344 aa).

Positions 7–124 (RVLVVDDSAF…SLTFRQVAPE (118 aa)) constitute a Response regulatory domain. Aspartate 58 is modified (4-aspartylphosphate). Residues 154 to 344 (PAVSGKIVVI…KIPEKLIELV (191 aa)) form the CheB-type methylesterase domain. Catalysis depends on residues serine 166, histidine 193, and aspartate 289.

It belongs to the CheB family. Post-translationally, phosphorylated by CheA. Phosphorylation of the N-terminal regulatory domain activates the methylesterase activity.

It localises to the cytoplasm. It catalyses the reaction [protein]-L-glutamate 5-O-methyl ester + H2O = L-glutamyl-[protein] + methanol + H(+). The catalysed reaction is L-glutaminyl-[protein] + H2O = L-glutamyl-[protein] + NH4(+). Its function is as follows. Involved in chemotaxis. Part of a chemotaxis signal transduction system that modulates chemotaxis in response to various stimuli. Catalyzes the demethylation of specific methylglutamate residues introduced into the chemoreceptors (methyl-accepting chemotaxis proteins or MCP) by CheR. Also mediates the irreversible deamidation of specific glutamine residues to glutamic acid. The polypeptide is Protein-glutamate methylesterase/protein-glutamine glutaminase (Thermotoga maritima (strain ATCC 43589 / DSM 3109 / JCM 10099 / NBRC 100826 / MSB8)).